A 908-amino-acid chain; its full sequence is Mechanosensitive ion channel protein 8 (908 aa).

Polar residues predominate over residues M1–P25. Disordered stretches follow at residues M1–V88, D148–A172, V190–E221, and V242–G265. The segment covering P31 to S70 has biased composition (basic and acidic residues). Polar residues-rich tracts occupy residues Q75–H85 and H156–D171. The segment covering S196 to S206 has biased composition (low complexity). The span at A207–L218 shows a compositional bias: polar residues. Positions R247 to E256 are enriched in basic and acidic residues. The next 6 membrane-spanning stretches (helical) occupy residues A298–L318, L341–I361, A381–K401, F411–I431, M673–A693, and A709–V729.

This sequence belongs to the MscS (TC 1.A.23) family. As to expression, expressed in tricellular and mature pollen, and in germinating tube. Not detected in leaves or roots.

The protein resides in the cell membrane. It is found in the endomembrane system. With respect to regulation, not regulated by MgCl(2), ruthenium red or tetramethylammonium-Cl. Mechanosensitive channel that opens in response to stretch forces in the membrane lipid bilayer. Exhibits a 6.3-fold preference for chloride over sodium. Regulates osmotic forces during pollen hydration and germination. This Arabidopsis thaliana (Mouse-ear cress) protein is Mechanosensitive ion channel protein 8.